The primary structure comprises 673 residues: DNA topoisomerase 1 (673 aa).

The Toprim domain maps to 1-134 (MVAEKPKAAA…ARRMKFSTLA (134 aa)). The Mg(2+) site is built by E4 and D103. Residues 149–568 (DVEMIEAGMA…MSKKTISKLL (420 aa)) enclose the Topo IA-type catalytic domain. Residues 189–194 (SAGRVQ) form an interaction with DNA region. Catalysis depends on Y311, which acts as the O-(5'-phospho-DNA)-tyrosine intermediate. Residues 352 to 374 (LRPVQGSKDDPAHPAIHPTGEKP) are disordered. The segment at 595–615 (CHLCGRKAVSAVSGYRLCSHH) adopts a C4-type zinc-finger fold.

Belongs to the type IA topoisomerase family. As to quaternary structure, monomer. Requires Mg(2+) as cofactor.

It carries out the reaction ATP-independent breakage of single-stranded DNA, followed by passage and rejoining.. Its function is as follows. Releases the supercoiling and torsional tension of DNA, which is introduced during the DNA replication and transcription, by transiently cleaving and rejoining one strand of the DNA duplex. Introduces a single-strand break via transesterification at a target site in duplex DNA. The scissile phosphodiester is attacked by the catalytic tyrosine of the enzyme, resulting in the formation of a DNA-(5'-phosphotyrosyl)-enzyme intermediate and the expulsion of a 3'-OH DNA strand. The free DNA strand then undergoes passage around the unbroken strand, thus removing DNA supercoils. Finally, in the religation step, the DNA 3'-OH attacks the covalent intermediate to expel the active-site tyrosine and restore the DNA phosphodiester backbone. This is DNA topoisomerase 1 from Aeropyrum pernix (strain ATCC 700893 / DSM 11879 / JCM 9820 / NBRC 100138 / K1).